The chain runs to 699 residues: Elongation factor G (699 aa).

One can recognise a tr-type G domain in the interval 8–283 (EHIRNIGICA…AIVDFLPSPI (276 aa)). Residues 17 to 24 (AHIDAGKT), 81 to 85 (DTPGH), and 135 to 138 (NKMD) each bind GTP.

This sequence belongs to the TRAFAC class translation factor GTPase superfamily. Classic translation factor GTPase family. EF-G/EF-2 subfamily.

The protein resides in the cytoplasm. Catalyzes the GTP-dependent ribosomal translocation step during translation elongation. During this step, the ribosome changes from the pre-translocational (PRE) to the post-translocational (POST) state as the newly formed A-site-bound peptidyl-tRNA and P-site-bound deacylated tRNA move to the P and E sites, respectively. Catalyzes the coordinated movement of the two tRNA molecules, the mRNA and conformational changes in the ribosome. The polypeptide is Elongation factor G (Rickettsia typhi (strain ATCC VR-144 / Wilmington)).